We begin with the raw amino-acid sequence, 358 residues long: Methylthioribose-1-phosphate isomerase (358 aa).

Residues 54–56, Arg-96, and Gln-205 each bind substrate; that span reads RGA. Asp-246 serves as the catalytic Proton donor. A substrate-binding site is contributed by 256–257; the sequence is NK.

Belongs to the eIF-2B alpha/beta/delta subunits family. MtnA subfamily.

It carries out the reaction 5-(methylsulfanyl)-alpha-D-ribose 1-phosphate = 5-(methylsulfanyl)-D-ribulose 1-phosphate. It functions in the pathway amino-acid biosynthesis; L-methionine biosynthesis via salvage pathway; L-methionine from S-methyl-5-thio-alpha-D-ribose 1-phosphate: step 1/6. In terms of biological role, catalyzes the interconversion of methylthioribose-1-phosphate (MTR-1-P) into methylthioribulose-1-phosphate (MTRu-1-P). This Pseudomonas syringae pv. tomato (strain ATCC BAA-871 / DC3000) protein is Methylthioribose-1-phosphate isomerase.